A 1074-amino-acid polypeptide reads, in one-letter code: Phospholipase D1 (1074 aa).

A PX domain is found at 81–212 (IKAQVLEVER…TEFLDVSQLS (132 aa)). The region spanning 219–328 (PKGLEGMIMK…WGGAIEEFIR (110 aa)) is the PH domain. Residues cysteine 240 and cysteine 241 are each lipidated (S-palmitoyl cysteine). Residues 459–486 (YLWAHHEKLVIIDQSVAFVGGIDLAYGR) form the PLD phosphodiesterase 1 domain. The catalytic stretch occupies residues 463 to 928 (HHEKLVIIDQ…MLGKRDSEMA (466 aa)). A phosphoserine mark is found at serine 499, serine 561, and serine 629. Residues 891–918 (ELIYVHSKLLIADDNTVIIGSANINDRS) form the PLD phosphodiesterase 2 domain.

The protein belongs to the phospholipase D family. As to quaternary structure, interacts with PIP5K1B. As to expression, expressed in kidney, lung, and at a much lower levels, in brain, liver, heart, testis and spleen.

Its subcellular location is the cytoplasm. It localises to the perinuclear region. It is found in the endoplasmic reticulum membrane. The protein localises to the golgi apparatus membrane. The protein resides in the late endosome membrane. It carries out the reaction a 1,2-diacyl-sn-glycero-3-phosphocholine + H2O = a 1,2-diacyl-sn-glycero-3-phosphate + choline + H(+). The enzyme catalyses ethanol + a 1,2-diacyl-sn-glycero-3-phosphocholine = 1,2-diacyl-sn-glycero-3-phosphoethanol + choline. It catalyses the reaction 1,2-dihexadecanoyl-sn-glycero-3-phosphocholine + H2O = 1,2-dihexadecanoyl-sn-glycero-3-phosphate + choline + H(+). With respect to regulation, stimulated by phosphatidylinositol 4,5-bisphosphate and phosphatidylinositol 3,4,5-trisphosphate, activated by the phosphokinase C-alpha, by the ADP-ribosylation factor-1 (ARF-1), and to a lesser extent by GTP-binding proteins: RHO A, RAC-1 and CDC42. Inhibited by oleate. Functionally, function as phospholipase selectivefor phosphatidylcholine. Implicated as a critical step in numerous cellular pathways, including signal transduction, membrane trafficking, and the regulation of mitosis. May be involved in the regulation of perinuclear intravesicular membrane traffic. The protein is Phospholipase D1 of Mus musculus (Mouse).